The sequence spans 431 residues: UDP-N-acetylmuramate--L-alanine ligase (431 aa).

108-114 contributes to the ATP binding site; the sequence is GSHGKTS.

The protein belongs to the MurCDEF family.

Its subcellular location is the cytoplasm. It catalyses the reaction UDP-N-acetyl-alpha-D-muramate + L-alanine + ATP = UDP-N-acetyl-alpha-D-muramoyl-L-alanine + ADP + phosphate + H(+). It participates in cell wall biogenesis; peptidoglycan biosynthesis. Cell wall formation. This Macrococcus caseolyticus (strain JCSC5402) (Macrococcoides caseolyticum) protein is UDP-N-acetylmuramate--L-alanine ligase.